Reading from the N-terminus, the 217-residue chain is FMN-dependent NADH:quinone oxidoreductase (217 aa).

FMN is bound by residues Ser-10 and 16–18 (SVS).

Belongs to the azoreductase type 1 family. Homodimer. Requires FMN as cofactor.

It carries out the reaction 2 a quinone + NADH + H(+) = 2 a 1,4-benzosemiquinone + NAD(+). It catalyses the reaction N,N-dimethyl-1,4-phenylenediamine + anthranilate + 2 NAD(+) = 2-(4-dimethylaminophenyl)diazenylbenzoate + 2 NADH + 2 H(+). Functionally, quinone reductase that provides resistance to thiol-specific stress caused by electrophilic quinones. In terms of biological role, also exhibits azoreductase activity. Catalyzes the reductive cleavage of the azo bond in aromatic azo compounds to the corresponding amines. In Polaromonas naphthalenivorans (strain CJ2), this protein is FMN-dependent NADH:quinone oxidoreductase.